A 222-amino-acid polypeptide reads, in one-letter code: Phosphoenolpyruvate guanylyltransferase (222 aa).

The phosphoenolpyruvate site is built by threonine 134, glycine 150, and serine 153.

This sequence belongs to the CofC family.

It carries out the reaction phosphoenolpyruvate + GTP + H(+) = enolpyruvoyl-2-diphospho-5'-guanosine + diphosphate. It participates in cofactor biosynthesis; coenzyme F420 biosynthesis. Functionally, guanylyltransferase that catalyzes the activation of phosphoenolpyruvate (PEP) as enolpyruvoyl-2-diphospho-5'-guanosine, via the condensation of PEP with GTP. It is involved in the biosynthesis of coenzyme F420, a hydride carrier cofactor. The polypeptide is Phosphoenolpyruvate guanylyltransferase (Roseiflexus sp. (strain RS-1)).